The following is a 156-amino-acid chain: ATP synthase subunit b (156 aa).

Residues 13 to 33 form a helical membrane-spanning segment; that stretch reads AFIIFVWFCMKFVWPPLMNAI.

This sequence belongs to the ATPase B chain family. In terms of assembly, F-type ATPases have 2 components, F(1) - the catalytic core - and F(0) - the membrane proton channel. F(1) has five subunits: alpha(3), beta(3), gamma(1), delta(1), epsilon(1). F(0) has three main subunits: a(1), b(2) and c(10-14). The alpha and beta chains form an alternating ring which encloses part of the gamma chain. F(1) is attached to F(0) by a central stalk formed by the gamma and epsilon chains, while a peripheral stalk is formed by the delta and b chains.

The protein resides in the cell inner membrane. In terms of biological role, f(1)F(0) ATP synthase produces ATP from ADP in the presence of a proton or sodium gradient. F-type ATPases consist of two structural domains, F(1) containing the extramembraneous catalytic core and F(0) containing the membrane proton channel, linked together by a central stalk and a peripheral stalk. During catalysis, ATP synthesis in the catalytic domain of F(1) is coupled via a rotary mechanism of the central stalk subunits to proton translocation. Component of the F(0) channel, it forms part of the peripheral stalk, linking F(1) to F(0). This is ATP synthase subunit b from Shewanella sediminis (strain HAW-EB3).